A 232-amino-acid chain; its full sequence is Large ribosomal subunit protein uL16m (232 aa).

A mitochondrion-targeting transit peptide spans 1–41 (MFPYLTRMNLSIKMGGLTLKESSPNAFLNNTTIARRFKHEY).

It belongs to the universal ribosomal protein uL16 family. In terms of assembly, component of the mitochondrial large ribosomal subunit (mt-LSU). Mature yeast 74S mitochondrial ribosomes consist of a small (37S) and a large (54S) subunit. The 37S small subunit contains a 15S ribosomal RNA (15S mt-rRNA) and 34 different proteins. The 54S large subunit contains a 21S rRNA (21S mt-rRNA) and 46 different proteins.

Its subcellular location is the mitochondrion. In terms of biological role, component of the mitochondrial ribosome (mitoribosome), a dedicated translation machinery responsible for the synthesis of mitochondrial genome-encoded proteins, including at least some of the essential transmembrane subunits of the mitochondrial respiratory chain. The mitoribosomes are attached to the mitochondrial inner membrane and translation products are cotranslationally integrated into the membrane. In Saccharomyces cerevisiae (strain ATCC 204508 / S288c) (Baker's yeast), this protein is Large ribosomal subunit protein uL16m (MRPL16).